We begin with the raw amino-acid sequence, 241 residues long: Transforming protein p29 (241 aa).

Residues 1–41 (MPAARAAPAADEPMRDPVAPVRAPALPRPAPGAVAPASGGA) form a disordered region. 2 S-palmitoyl cysteine; by host lipidation sites follow: Cys233 and Cys236. The residue at position 238 (Cys238) is a Cysteine methyl ester; by host. A lipid anchor (S-farnesyl cysteine; by host) is attached at Cys238. The propeptide at 239–241 (VLS) is removed in mature form.

Belongs to the small GTPase superfamily. Ras family.

The protein resides in the host cell membrane. The catalysed reaction is GTP + H2O = GDP + phosphate + H(+). Alternates between an inactive form bound to GDP and an active form bound to GTP. Activated by a guanine nucleotide-exchange factor (GEF) and inactivated by a GTPase-activating protein (GAP). The polypeptide is Transforming protein p29 (H-RAS) (Mus musculus (Mouse)).